Reading from the N-terminus, the 452-residue chain is 23S rRNA (uracil(1939)-C(5))-methyltransferase RlmD (452 aa).

A TRAM domain is found at 1 to 57; sequence METEVNVAEISALDYEGRGVTKVGGKTVFIKGALPSERVGFRIVRQKKQFDEAEAVA. [4Fe-4S] cluster contacts are provided by Cys70, Cys76, Cys79, and Cys157. Gln269, Phe298, Asn303, Glu319, Asn347, and Asp368 together coordinate S-adenosyl-L-methionine. Cys395 (nucleophile) is an active-site residue.

Belongs to the class I-like SAM-binding methyltransferase superfamily. RNA M5U methyltransferase family. RlmD subfamily.

It catalyses the reaction uridine(1939) in 23S rRNA + S-adenosyl-L-methionine = 5-methyluridine(1939) in 23S rRNA + S-adenosyl-L-homocysteine + H(+). Catalyzes the formation of 5-methyl-uridine at position 1939 (m5U1939) in 23S rRNA. The chain is 23S rRNA (uracil(1939)-C(5))-methyltransferase RlmD from Neisseria lactamica (strain 020-06).